Reading from the N-terminus, the 183-residue chain is Crossover junction endodeoxyribonuclease RuvC (183 aa).

Active-site residues include Asp7, Glu66, and Asp138. Residues Asp7, Glu66, and Asp138 each contribute to the Mg(2+) site.

Belongs to the RuvC family. Homodimer which binds Holliday junction (HJ) DNA. The HJ becomes 2-fold symmetrical on binding to RuvC with unstacked arms; it has a different conformation from HJ DNA in complex with RuvA. In the full resolvosome a probable DNA-RuvA(4)-RuvB(12)-RuvC(2) complex forms which resolves the HJ. It depends on Mg(2+) as a cofactor.

The protein localises to the cytoplasm. The enzyme catalyses Endonucleolytic cleavage at a junction such as a reciprocal single-stranded crossover between two homologous DNA duplexes (Holliday junction).. In terms of biological role, the RuvA-RuvB-RuvC complex processes Holliday junction (HJ) DNA during genetic recombination and DNA repair. Endonuclease that resolves HJ intermediates. Cleaves cruciform DNA by making single-stranded nicks across the HJ at symmetrical positions within the homologous arms, yielding a 5'-phosphate and a 3'-hydroxyl group; requires a central core of homology in the junction. The consensus cleavage sequence is 5'-(A/T)TT(C/G)-3'. Cleavage occurs on the 3'-side of the TT dinucleotide at the point of strand exchange. HJ branch migration catalyzed by RuvA-RuvB allows RuvC to scan DNA until it finds its consensus sequence, where it cleaves and resolves the cruciform DNA. This is Crossover junction endodeoxyribonuclease RuvC from Burkholderia ambifaria (strain MC40-6).